Reading from the N-terminus, the 156-residue chain is Cyanate hydratase (156 aa).

Active-site residues include arginine 96, glutamate 99, and serine 122.

Belongs to the cyanase family.

The catalysed reaction is cyanate + hydrogencarbonate + 3 H(+) = NH4(+) + 2 CO2. In terms of biological role, catalyzes the reaction of cyanate with bicarbonate to produce ammonia and carbon dioxide. The polypeptide is Cyanate hydratase (Burkholderia ambifaria (strain MC40-6)).